The sequence spans 200 residues: Large ribosomal subunit protein uL4 (200 aa).

Residues 38–67 (GRQGSKAQKTRSEVSGGGKKPWRQKGTGRA) form a disordered region.

The protein belongs to the universal ribosomal protein uL4 family. Part of the 50S ribosomal subunit.

Functionally, one of the primary rRNA binding proteins, this protein initially binds near the 5'-end of the 23S rRNA. It is important during the early stages of 50S assembly. It makes multiple contacts with different domains of the 23S rRNA in the assembled 50S subunit and ribosome. Its function is as follows. Forms part of the polypeptide exit tunnel. The protein is Large ribosomal subunit protein uL4 of Pseudomonas paraeruginosa (strain DSM 24068 / PA7) (Pseudomonas aeruginosa (strain PA7)).